A 254-amino-acid chain; its full sequence is Small ribosomal subunit protein uS3 (254 aa).

In terms of domain architecture, KH type-2 spans 39 to 109; the sequence is IRNYISARLK…EVKIDVIEVI (71 aa). The segment at 220 to 254 is disordered; the sequence is EEMKKMQERRNDSRGRGRGDGRGAKRRRRPAAKKA. Over residues 221 to 242 the composition is skewed to basic and acidic residues; it reads EMKKMQERRNDSRGRGRGDGRG. Residues 243–254 show a composition bias toward basic residues; that stretch reads AKRRRRPAAKKA.

It belongs to the universal ribosomal protein uS3 family. In terms of assembly, part of the 30S ribosomal subunit. Forms a tight complex with proteins S10 and S14.

Its function is as follows. Binds the lower part of the 30S subunit head. Binds mRNA in the 70S ribosome, positioning it for translation. The protein is Small ribosomal subunit protein uS3 of Chlorobaculum parvum (strain DSM 263 / NCIMB 8327) (Chlorobium vibrioforme subsp. thiosulfatophilum).